Reading from the N-terminus, the 214-residue chain is C-type lectin domain family 4 member E (214 aa).

The Cytoplasmic segment spans residues 1 to 22; it reads MNSTKSPASHHTERGCFKNSQV. A helical; Signal-anchor for type II membrane protein transmembrane segment spans residues 23-45; sequence LSWTIAGASILFLSGCFITRCVV. Topologically, residues 46–214 are extracellular; that stretch reads TYRSSQISGQ…CEMPEISPLD (169 aa). C80 and C91 are joined by a disulfide. The 120-residue stretch at 87–206 folds into the C-type lectin domain; it reads YQSSCYFFST…CFYSMPWICE (120 aa). N-linked (GlcNAc...) asparagine glycosylation occurs at N107. 2 disulfide bridges follow: C108/C205 and C179/C197. Residues V117, E123, E169, N171, N193, D194, and E206 each contribute to the Ca(2+) site. Positions 169–171 match the Confers specificity for glucose/mannose-type carbohydrates motif; that stretch reads EPN.

In terms of assembly, monomer and homodimer. Interacts with signaling adapter Fc receptor gamma chain/FCER1G to form a functional complex; the interaction is direct. Alternatively, acts as a bridge for interaction between CLEC4D and FCER1G. A heterodimer of CLEC4E and CLEC4D associates with FCER1G to form a functional complex. Interacts with SAP130 nuclear protein that is released from necrotic cells; the interaction is direct. In terms of tissue distribution, highly expressed in macrophages in response to stimulation with bacterial glycolipids and pro-inflammatory cytokines. Expressed in dendritic cells (at protein level) in response to stimulation with mycobacterial trehalose 6,6'-dimycolate (TDM).

It is found in the cell membrane. Its subcellular location is the cell projection. The protein resides in the phagocytic cup. Calcium-dependent lectin that acts as a pattern recognition receptor (PRR) of the innate immune system: recognizes damage-associated molecular patterns (DAMPs) of abnormal self and pathogen-associated molecular patterns (PAMPs) of bacteria and fungi. The PAMPs notably include mycobacterial trehalose 6,6'-dimycolate (TDM), a cell wall glycolipid with potent adjuvant immunomodulatory functions. Interacts with signaling adapter Fc receptor gamma chain/FCER1G to form a functional complex in myeloid cells. Binding of mycobacterial trehalose 6,6'-dimycolate (TDM) to this receptor complex leads to phosphorylation of the immunoreceptor tyrosine-based activation motif (ITAM) of FCER1G, triggering activation of SYK, CARD9 and NF-kappa-B, consequently driving maturation of antigen-presenting cells and shaping antigen-specific priming of T-cells toward effector T-helper 1 (Th1) and T-helper 17 (Th17) cell subtypes. Also recognizes alpha-mannose residues on pathogenic fungi of the genus Malassezia and mediates macrophage activation. Through recognition of DAMPs released upon nonhomeostatic cell death, enables immune sensing of damaged self and promotes inflammatory cell infiltration into the damaged tissue. This Mus musculus (Mouse) protein is C-type lectin domain family 4 member E.